The sequence spans 417 residues: Histidine--tRNA ligase (417 aa).

The protein belongs to the class-II aminoacyl-tRNA synthetase family. Homodimer.

The protein localises to the cytoplasm. The enzyme catalyses tRNA(His) + L-histidine + ATP = L-histidyl-tRNA(His) + AMP + diphosphate + H(+). This Caldanaerobacter subterraneus subsp. tengcongensis (strain DSM 15242 / JCM 11007 / NBRC 100824 / MB4) (Thermoanaerobacter tengcongensis) protein is Histidine--tRNA ligase.